The chain runs to 386 residues: uncharacterized protein (386 aa).

Transmembrane regions (helical) follow at residues 54-74 (AVLQMIDPPALVGCIAQAIVA) and 347-367 (LLGGIPLAGFFAAGEIGPIAG).

This sequence to M.tuberculosis Rv0628c.

The protein resides in the cell membrane. This is an uncharacterized protein from Mycobacterium tuberculosis (strain CDC 1551 / Oshkosh).